The sequence spans 437 residues: Phosphomethylpyrimidine synthase (437 aa).

Residues Asn-69, Met-98, Tyr-127, His-163, 185 to 187 (SRG), 226 to 229 (DACR), and Glu-265 contribute to the substrate site. A Zn(2+)-binding site is contributed by His-269. Tyr-292 contributes to the substrate binding site. A Zn(2+)-binding site is contributed by His-333. [4Fe-4S] cluster contacts are provided by Cys-409, Cys-412, and Cys-416.

It belongs to the ThiC family. [4Fe-4S] cluster is required as a cofactor.

It carries out the reaction 5-amino-1-(5-phospho-beta-D-ribosyl)imidazole + S-adenosyl-L-methionine = 4-amino-2-methyl-5-(phosphooxymethyl)pyrimidine + CO + 5'-deoxyadenosine + formate + L-methionine + 3 H(+). It participates in cofactor biosynthesis; thiamine diphosphate biosynthesis. In terms of biological role, catalyzes the synthesis of the hydroxymethylpyrimidine phosphate (HMP-P) moiety of thiamine from aminoimidazole ribotide (AIR) in a radical S-adenosyl-L-methionine (SAM)-dependent reaction. This Alkaliphilus metalliredigens (strain QYMF) protein is Phosphomethylpyrimidine synthase.